Reading from the N-terminus, the 415-residue chain is Multidrug resistance protein MdtA (415 aa).

Positions 1 to 21 are cleaved as a signal peptide; sequence MKGSYKSRWVIVIVVVIAAIA. 2 disordered regions span residues 32-59 and 392-415; these read SRSAAPGATKQAQQSPAGGRRGMRSGPL and EAQSATTSEEKATSREYAKKGARS. Positions 399–415 are enriched in basic and acidic residues; sequence SEEKATSREYAKKGARS.

This sequence belongs to the membrane fusion protein (MFP) (TC 8.A.1) family. Part of a tripartite efflux system composed of MdtA, MdtB and MdtC.

Its subcellular location is the cell inner membrane. The MdtABC tripartite complex confers resistance against novobiocin and deoxycholate. In Escherichia coli O17:K52:H18 (strain UMN026 / ExPEC), this protein is Multidrug resistance protein MdtA.